A 589-amino-acid chain; its full sequence is 2-succinyl-5-enolpyruvyl-6-hydroxy-3-cyclohexene-1-carboxylate synthase (589 aa).

The interval 198–222 (DAATTEGAHDSHAPSQPTRGPRKLP) is disordered.

It belongs to the TPP enzyme family. MenD subfamily. As to quaternary structure, homodimer. It depends on Mg(2+) as a cofactor. Mn(2+) serves as cofactor. Requires thiamine diphosphate as cofactor.

The enzyme catalyses isochorismate + 2-oxoglutarate + H(+) = 5-enolpyruvoyl-6-hydroxy-2-succinyl-cyclohex-3-ene-1-carboxylate + CO2. It participates in quinol/quinone metabolism; 1,4-dihydroxy-2-naphthoate biosynthesis; 1,4-dihydroxy-2-naphthoate from chorismate: step 2/7. It functions in the pathway quinol/quinone metabolism; menaquinone biosynthesis. Its function is as follows. Catalyzes the thiamine diphosphate-dependent decarboxylation of 2-oxoglutarate and the subsequent addition of the resulting succinic semialdehyde-thiamine pyrophosphate anion to isochorismate to yield 2-succinyl-5-enolpyruvyl-6-hydroxy-3-cyclohexene-1-carboxylate (SEPHCHC). This chain is 2-succinyl-5-enolpyruvyl-6-hydroxy-3-cyclohexene-1-carboxylate synthase, found in Corynebacterium jeikeium (strain K411).